We begin with the raw amino-acid sequence, 425 residues long: Enolase (425 aa).

Residue Gln-163 participates in (2R)-2-phosphoglycerate binding. Glu-205 (proton donor) is an active-site residue. Positions 242, 285, and 312 each coordinate Mg(2+). (2R)-2-phosphoglycerate contacts are provided by Lys-337, Arg-366, Ser-367, and Lys-388. Lys-337 (proton acceptor) is an active-site residue.

This sequence belongs to the enolase family. It depends on Mg(2+) as a cofactor.

It is found in the cytoplasm. Its subcellular location is the secreted. The protein resides in the cell surface. It carries out the reaction (2R)-2-phosphoglycerate = phosphoenolpyruvate + H2O. It functions in the pathway carbohydrate degradation; glycolysis; pyruvate from D-glyceraldehyde 3-phosphate: step 4/5. In terms of biological role, catalyzes the reversible conversion of 2-phosphoglycerate (2-PG) into phosphoenolpyruvate (PEP). It is essential for the degradation of carbohydrates via glycolysis. This Syntrophomonas wolfei subsp. wolfei (strain DSM 2245B / Goettingen) protein is Enolase.